Reading from the N-terminus, the 78-residue chain is Omega-conotoxin-like 2 (78 aa).

An N-terminal signal peptide occupies residues 1 to 22 (MKLTCVVIVAVLLLTACQLITA). Residues 23–42 (DDSRGTQKHRSLRSTTKVSK) constitute a propeptide that is removed on maturation. 3 disulfide bridges follow: Cys46–Cys62, Cys53–Cys65, and Cys61–Cys72.

The protein belongs to the conotoxin O1 superfamily. Expressed by the venom duct.

The protein resides in the secreted. Omega-conotoxins act at presynaptic membranes, they bind and block voltage-gated calcium channels (Cav). The polypeptide is Omega-conotoxin-like 2 (Conus striatus (Striated cone)).